Reading from the N-terminus, the 199-residue chain is Probable GTP-binding protein EngB (199 aa).

In terms of domain architecture, EngB-type G spans 28-199; the sequence is DLPEVALAGR…EAWDTILAEL (172 aa). GTP is bound by residues 36–43, 63–67, 81–84, 148–151, and 180–182; these read GRSNVGKS, GKTQL, DVPG, TKAD, and FSS. Mg(2+)-binding residues include serine 43 and threonine 65.

The protein belongs to the TRAFAC class TrmE-Era-EngA-EngB-Septin-like GTPase superfamily. EngB GTPase family. The cofactor is Mg(2+).

Necessary for normal cell division and for the maintenance of normal septation. The sequence is that of Probable GTP-binding protein EngB from Streptococcus thermophilus (strain CNRZ 1066).